Consider the following 719-residue polypeptide: Phenylalanine--tRNA ligase beta subunit, chloroplastic (719 aa).

A B5 domain is found at 318 to 403 (DHALNINLSI…RIYGYHKFRS (86 aa)). 4 residues coordinate Mg(2+): Asp-381, Asp-387, Glu-390, and Glu-391. The FDX-ACB domain maps to 625–718 (SKYPSIIRDL…IVKQLNLKIR (94 aa)).

This sequence belongs to the phenylalanyl-tRNA synthetase beta subunit family. Type 1 subfamily. As to quaternary structure, tetramer of two alpha and two beta subunits. Mg(2+) is required as a cofactor.

Its subcellular location is the plastid. The protein resides in the chloroplast. It carries out the reaction tRNA(Phe) + L-phenylalanine + ATP = L-phenylalanyl-tRNA(Phe) + AMP + diphosphate + H(+). This chain is Phenylalanine--tRNA ligase beta subunit, chloroplastic, found in Pyropia yezoensis (Susabi-nori).